Reading from the N-terminus, the 343-residue chain is Fe-S cluster assembly protein DRE2 (343 aa).

The interval 1–188 (MTVSRDSLVL…KKLTKKVSAI (188 aa)) is N-terminal SAM-like domain. Positions 189 to 240 (KLTDSDLEDDDDDLESDDSANNSKTKFFDDFDDPETGDSIDEDDLIAETEED) are linker. Composition is skewed to acidic residues over residues 195–206 (LEDDDDDLESDD) and 218–228 (DFDDPETGDSI). Residues 195–228 (LEDDDDDLESDDSANNSKTKFFDDFDDPETGDSI) form a disordered region. [2Fe-2S] cluster-binding residues include Cys247, Cys258, Cys261, and Cys263. The fe-S binding site A stretch occupies residues 247–263 (CGKSKQRRRKACKDCSC). [4Fe-4S] cluster contacts are provided by Cys306, Cys309, Cys317, and Cys320. Short sequence motifs (cx2C motif) lie at residues 306-309 (CGSC) and 317-320 (CSGC). The tract at residues 306–320 (CGSCALGDAFRCSGC) is fe-S binding site B.

This sequence belongs to the anamorsin family. In terms of assembly, monomer. Interacts with TAH18. Interacts with MIA40. [2Fe-2S] cluster is required as a cofactor. It depends on [4Fe-4S] cluster as a cofactor.

The protein resides in the cytoplasm. It localises to the mitochondrion intermembrane space. Component of the cytosolic iron-sulfur (Fe-S) protein assembly (CIA) machinery required for the maturation of extramitochondrial Fe-S proteins. Part of an electron transfer chain functioning in an early step of cytosolic Fe-S biogenesis, facilitating the de novo assembly of a [4Fe-4S] cluster on the scaffold complex CFD1-NBP35. Electrons are transferred to DRE2 from NADPH via the FAD- and FMN-containing protein TAH18. TAH18-DRE2 are also required for the assembly of the diferric tyrosyl radical cofactor of ribonucleotide reductase (RNR), probably by providing electrons for reduction during radical cofactor maturation in the catalytic small subunit RNR2. This Kluyveromyces lactis (strain ATCC 8585 / CBS 2359 / DSM 70799 / NBRC 1267 / NRRL Y-1140 / WM37) (Yeast) protein is Fe-S cluster assembly protein DRE2.